We begin with the raw amino-acid sequence, 254 residues long: Type III pantothenate kinase (254 aa).

Residue 6-13 (DVGNTNIV) participates in ATP binding. Substrate is bound by residues F100 and 107–110 (GADR). D109 acts as the Proton acceptor in catalysis. D129 contacts K(+). T132 contacts ATP. T184 serves as a coordination point for substrate.

This sequence belongs to the type III pantothenate kinase family. As to quaternary structure, homodimer. It depends on NH4(+) as a cofactor. The cofactor is K(+).

It localises to the cytoplasm. It carries out the reaction (R)-pantothenate + ATP = (R)-4'-phosphopantothenate + ADP + H(+). It participates in cofactor biosynthesis; coenzyme A biosynthesis; CoA from (R)-pantothenate: step 1/5. Its function is as follows. Catalyzes the phosphorylation of pantothenate (Pan), the first step in CoA biosynthesis. In Moorella thermoacetica (strain ATCC 39073 / JCM 9320), this protein is Type III pantothenate kinase.